A 710-amino-acid chain; its full sequence is Denticleless protein homolog A (710 aa).

WD repeat units lie at residues 47 to 89 (GMPV…MQRL), 96 to 135 (AHTNAVFDIAWVPGEHKLVTASGDQTAKLWDVMAGELIGE), and 138 to 178 (GHQC…KDGF). The DDB1-binding motif motif lies at 168-171 (WDTR). Positions 197–204 (PSKMKKRK) match the Nuclear localization signal motif. WD repeat units follow at residues 215 to 254 (DSQQSVTVVIFQDEYTIISAGAVDGVVKIWDLRKNYSAYR), 270 to 309 (TRKLGYSSLVLDPTGTNLFASCTDDNVYMFNATGLKTDPV), 314 to 355 (GHQN…AAPV), and 359 to 398 (GHCQEVTSVAWCQSDFTKIATCSDDNTVRVWRLKRSCEDS). Residues 244 to 247 (WDLR) carry the DDB1-binding motif motif. Disordered stretches follow at residues 428–534 (GKPS…VSSA) and 652–698 (ALGH…PGSM). The segment covering 430–450 (PSVMSSSSLTSSPTPASCAPS) has biased composition (low complexity). 2 stretches are compositionally biased toward polar residues: residues 504–516 (TPKSSTRTDTKTP) and 659–690 (SSPQNKASGSPSSRTSTTKKQQPRNAPNSPVS).

Belongs to the WD repeat cdt2 family. As to quaternary structure, component of the DCX(DTL) E3 ubiquitin ligase complex, at least composed of cul4 (cul4a or cul4b), ddb1, dtl/cdt2 and rbx1.

It localises to the nucleus. Its subcellular location is the cytoplasm. The protein localises to the cytoskeleton. It is found in the microtubule organizing center. The protein resides in the centrosome. It localises to the chromosome. The protein operates within protein modification; protein ubiquitination. In terms of biological role, substrate-specific adapter of a DCX (DDB1-CUL4-X-box) E3 ubiquitin-protein ligase complex required for cell cycle control, DNA damage response and translesion DNA synthesis. The DCX(DTL) complex, also named CRL4(CDT2) complex, mediates the polyubiquitination and subsequent degradation of CDT1, CDKN1A/p21(CIP1), KMT5A and SDE2. CDT1 degradation in response to DNA damage is necessary to ensure proper cell cycle regulation of DNA replication. CDKN1A/p21(CIP1) degradation during S phase or following UV irradiation is essential to control replication licensing. KMT5A degradation is also important for a proper regulation of mechanisms such as TGF-beta signaling, cell cycle progression, DNA repair and cell migration. Most substrates require their interaction with PCNA for their polyubiquitination: substrates interact with PCNA via their PIP-box, and those containing the 'K+4' motif in the PIP box, recruit the DCX(DTL) complex, leading to their degradation. In undamaged proliferating cells, the DCX(DTL) complex also promotes the 'Lys-164' monoubiquitination of PCNA, thereby being involved in PCNA-dependent translesion DNA synthesis. May play a role in the regulation of the circadian clock. This chain is Denticleless protein homolog A (dtl-a), found in Xenopus laevis (African clawed frog).